The primary structure comprises 198 residues: Holliday junction branch migration complex subunit RuvA (198 aa).

A domain I region spans residues 1–63 (MIAYLSGAVR…EDAQLLFGFL (63 aa)). Residues 64–142 (DTDSLRLFDL…EHLAAGAPVS (79 aa)) form a domain II region. A flexible linker region spans residues 143–150 (AGKAALTS). The segment at 150–198 (STAGRDAIEALLALGFREPQVRSVVAELLAADPEQSADALIRKGLGKLR) is domain III.

The protein belongs to the RuvA family. As to quaternary structure, homotetramer. Forms an RuvA(8)-RuvB(12)-Holliday junction (HJ) complex. HJ DNA is sandwiched between 2 RuvA tetramers; dsDNA enters through RuvA and exits via RuvB. An RuvB hexamer assembles on each DNA strand where it exits the tetramer. Each RuvB hexamer is contacted by two RuvA subunits (via domain III) on 2 adjacent RuvB subunits; this complex drives branch migration. In the full resolvosome a probable DNA-RuvA(4)-RuvB(12)-RuvC(2) complex forms which resolves the HJ.

Its subcellular location is the cytoplasm. In terms of biological role, the RuvA-RuvB-RuvC complex processes Holliday junction (HJ) DNA during genetic recombination and DNA repair, while the RuvA-RuvB complex plays an important role in the rescue of blocked DNA replication forks via replication fork reversal (RFR). RuvA specifically binds to HJ cruciform DNA, conferring on it an open structure. The RuvB hexamer acts as an ATP-dependent pump, pulling dsDNA into and through the RuvAB complex. HJ branch migration allows RuvC to scan DNA until it finds its consensus sequence, where it cleaves and resolves the cruciform DNA. The sequence is that of Holliday junction branch migration complex subunit RuvA from Deinococcus geothermalis (strain DSM 11300 / CIP 105573 / AG-3a).